The primary structure comprises 1452 residues: CLIP-associating protein 1 (1452 aa).

3 HEAT repeats span residues 68–87, 88–124, and 163–200; these read LLGMDILSALVTRLQDRFRS, QIGTVLPSLMDRLGDAKDSVREQDQNLLIKIMEQASN, and LTLSKIVPHICNLLGDPNSQVRDAAINCLVEIYRHVGE. Residues 239-299 form a disordered region; it reads KNFDDEDSVD…GTAKEGAGGV (61 aa). Residues 253–267 show a composition bias toward low complexity; the sequence is SSASSSASSKAPQAA. 2 HEAT repeats span residues 407–442 and 443–479; these read HGAEAIMPTVFNLVPNSAKIMATSGVVAIRLIIRQT and HVPRLIPIITSNCTSKSVAVRRRCYEFLDLLLQEWQT. Disordered regions lie at residues 545–735 and 771–792; these read SDSI…GISQ and YGMYSDDDANSDASSACSERSY. The span at 550–569 shows a compositional bias: low complexity; it reads SLPQSDRSSSSSQESLNRPL. Polar residues predominate over residues 573-597; that stretch reads RSPTGSTVSRASTATSKSTPGSLQR. 3 stretches are compositionally biased toward low complexity: residues 606-621, 645-659, and 668-682; these read AATCAKSKATSGASAA, QSSGSTTSTASTPAD, and VVSQSQPGSRSSSPG. The span at 715–724 shows a compositional bias: polar residues; sequence QGCSRETSPS. A compositionally biased stretch (low complexity) spans 781–792; the sequence is SDASSACSERSY. One copy of the HEAT 6 repeat lies at 926–963; the sequence is QQFNILMRFIVDQTQTPNLKVKVAILKYIESLARQMDP. The disordered stretch occupies residues 1033–1076; the sequence is LKNSSNSSMGSPSNTIGRTPSRHSSSRASPLTSPTNCSHGGLSP. A compositionally biased stretch (low complexity) spans 1034–1046; it reads KNSSNSSMGSPSN. The segment covering 1058 to 1070 has biased composition (polar residues); that stretch reads SRASPLTSPTNCS. 2 HEAT repeats span residues 1256 to 1293 and 1374 to 1411; these read EHFKTILLLLLETLGDKDHAIRALALRVLREILRNQPA and QILPDIIPGLLQGYDNTESSVRKASVFCLVAIYSVIGE.

This sequence belongs to the CLASP family. In terms of assembly, interacts (via C-terminus) with clip1/clip-170, and cenpe.

The protein resides in the cytoplasm. The protein localises to the cytoskeleton. Its subcellular location is the microtubule organizing center. It is found in the centrosome. It localises to the chromosome. The protein resides in the centromere. The protein localises to the kinetochore. Its subcellular location is the spindle. It is found in the golgi apparatus. It localises to the trans-Golgi network. Its function is as follows. Microtubule plus-end tracking protein that promotes the stabilization of dynamic microtubules during anaphase. Plays a crucial role in chromatin-induced microtubule formation. May also act at microtubule minus ends. May be involved in the nucleation of noncentrosomal microtubules originating from the trans-Golgi network (TGN). In Xenopus tropicalis (Western clawed frog), this protein is CLIP-associating protein 1.